We begin with the raw amino-acid sequence, 492 residues long: RNase aCSPSF2 (492 aa).

Residues His130, His132, Asp134, His135, His213, Asp234, and His460 each coordinate a divalent metal cation.

The protein belongs to the metallo-beta-lactamase superfamily. RNA-metabolizing metallo-beta-lactamase-like family. Mg(2+) serves as cofactor.

In terms of biological role, a 5'-3' exoribonuclease, more active on 5'-monophosphorylated and 5'-hydroxylated RNA than 5'-tri-phosphorylated RNA; note there is no evidence for accumulation of 5'-monophosphorylated RNA in this organism. Translation initiation factor 2 subunit gamma but not subunit alpha protects 5'-tri-phosphorylated RNA from degradation by this enzyme. This Saccharolobus solfataricus (strain ATCC 35092 / DSM 1617 / JCM 11322 / P2) (Sulfolobus solfataricus) protein is RNase aCSPSF2.